Here is a 200-residue protein sequence, read N- to C-terminus: Ribosomal RNA large subunit methyltransferase E (200 aa).

S-adenosyl-L-methionine is bound by residues Gly51, Trp53, Asp71, Asp90, and Asp112. Lys151 serves as the catalytic Proton acceptor.

This sequence belongs to the class I-like SAM-binding methyltransferase superfamily. RNA methyltransferase RlmE family.

Its subcellular location is the cytoplasm. The enzyme catalyses uridine(2552) in 23S rRNA + S-adenosyl-L-methionine = 2'-O-methyluridine(2552) in 23S rRNA + S-adenosyl-L-homocysteine + H(+). Functionally, specifically methylates the uridine in position 2552 of 23S rRNA at the 2'-O position of the ribose in the fully assembled 50S ribosomal subunit. This chain is Ribosomal RNA large subunit methyltransferase E, found in Treponema pallidum (strain Nichols).